Reading from the N-terminus, the 140-residue chain is Alpha-lactalbumin (140 aa).

Residues 1–19 form the signal peptide; it reads MMSLLSLLLLGIALPATQA. Residues 20-140 enclose the C-type lysozyme domain; sequence IDYRKCQASQ…CIEDLDQWRC (121 aa). 4 disulfides stabilise this stretch: C25–C140, C47–C131, C80–C96, and C92–C110. A glycan (N-linked (GlcNAc...) asparagine) is linked at N63. 5 residues coordinate Ca(2+): K98, D101, D103, D106, and D107.

This sequence belongs to the glycosyl hydrolase 22 family. In terms of assembly, lactose synthase (LS) is a heterodimer of a catalytic component, beta1,4-galactosyltransferase (beta4Gal-T1) and a regulatory component, alpha-lactalbumin (LA). In terms of tissue distribution, mammary gland specific. Secreted in milk.

It is found in the secreted. Regulatory subunit of lactose synthase, changes the substrate specificity of galactosyltransferase in the mammary gland making glucose a good acceptor substrate for this enzyme. This enables LS to synthesize lactose, the major carbohydrate component of milk. In other tissues, galactosyltransferase transfers galactose onto the N-acetylglucosamine of the oligosaccharide chains in glycoproteins. The chain is Alpha-lactalbumin (LALBA) from Notamacropus eugenii (Tammar wallaby).